The chain runs to 396 residues: Elongation factor Tu (396 aa).

Residues 10–205 (KPHVNIGTIG…AVDESIPDPV (196 aa)) form the tr-type G domain. Residues 19 to 26 (GHVDHGKT) are G1. 19-26 (GHVDHGKT) is a GTP binding site. A Mg(2+)-binding site is contributed by T26. Residues 62–66 (GITIN) are G2. Residues 83–86 (DAPG) form a G3 region. GTP is bound by residues 83–87 (DAPGH) and 138–141 (NKAD). The tract at residues 138-141 (NKAD) is G4. The G5 stretch occupies residues 175–177 (SAL).

It belongs to the TRAFAC class translation factor GTPase superfamily. Classic translation factor GTPase family. EF-Tu/EF-1A subfamily. In terms of assembly, monomer.

The protein localises to the cytoplasm. It carries out the reaction GTP + H2O = GDP + phosphate + H(+). GTP hydrolase that promotes the GTP-dependent binding of aminoacyl-tRNA to the A-site of ribosomes during protein biosynthesis. The chain is Elongation factor Tu from Mycobacterium bovis (strain ATCC BAA-935 / AF2122/97).